The following is a 357-amino-acid chain: Sorbitol dehydrogenase (357 aa).

Alanine 2 is subject to N-acetylalanine. Residue cysteine 45 coordinates Zn(2+). Tyrosine 51 provides a ligand contact to substrate. Positions 70 and 71 each coordinate Zn(2+). Substrate is bound at residue glutamate 156. Serine 169 is modified (phosphoserine). NAD(+)-binding positions include valine 184, aspartate 204, arginine 209, 273 to 275 (VGM), and 297 to 299 (VFR). Substrate is bound by residues arginine 299 and tyrosine 300.

Belongs to the zinc-containing alcohol dehydrogenase family. In terms of assembly, homotetramer. Zn(2+) serves as cofactor. Testis has the highest level of expression, followed by kidney, liver, and lung. Low levels of expression are also observed in lens, brain, and skeletal muscle. Expressed in sperm flagellum and very low expression in the sperm head.

It localises to the mitochondrion membrane. The protein resides in the cell projection. Its subcellular location is the cilium. It is found in the flagellum. It carries out the reaction keto-D-fructose + NADH + H(+) = D-sorbitol + NAD(+). The catalysed reaction is xylitol + NAD(+) = D-xylulose + NADH + H(+). The enzyme catalyses L-iditol + NAD(+) = keto-L-sorbose + NADH + H(+). Its activity is regulated as follows. Inhibited in vitro by p-hydroxymercuribenzoate, EDTA, l,l0-phenanthroline and N-ethylmaleimide. Its function is as follows. Polyol dehydrogenase that catalyzes the reversible NAD(+)-dependent oxidation of various sugar alcohols. Is active with D-sorbitol (D-glucitol) leading to the C2-oxidized product D-fructose. Is a key enzyme in the polyol pathway that interconverts glucose and fructose via sorbitol, which constitutes an important alternate route for glucose metabolism. May play a role in sperm motility by using sorbitol as an alternative energy source for sperm motility and protein tyrosine phosphorylation. Has no activity on ethanol. Cannot use NADP(+) as the electron acceptor. This Mus musculus (Mouse) protein is Sorbitol dehydrogenase (Sord).